Reading from the N-terminus, the 480-residue chain is Siroheme synthase 2 (480 aa).

A precorrin-2 dehydrogenase /sirohydrochlorin ferrochelatase region spans residues 1 to 202 (MDYLPMFARL…QDWQSAETWL (202 aa)). Residues 22 to 23 (EV) and 43 to 44 (PE) each bind NAD(+). Ser126 bears the Phosphoserine mark. Residues 214 to 480 (GEVVLVGAGP…GCDLKLVNLA (267 aa)) are uroporphyrinogen-III C-methyltransferase. Pro223 provides a ligand contact to S-adenosyl-L-methionine. The Proton acceptor role is filled by Asp246. The Proton donor role is filled by Lys268. S-adenosyl-L-methionine contacts are provided by residues 299–301 (GGD), 329–330 (TA), Met381, and Gly410.

In the N-terminal section; belongs to the precorrin-2 dehydrogenase / sirohydrochlorin ferrochelatase family. It in the C-terminal section; belongs to the precorrin methyltransferase family.

The catalysed reaction is uroporphyrinogen III + 2 S-adenosyl-L-methionine = precorrin-2 + 2 S-adenosyl-L-homocysteine + H(+). The enzyme catalyses precorrin-2 + NAD(+) = sirohydrochlorin + NADH + 2 H(+). It catalyses the reaction siroheme + 2 H(+) = sirohydrochlorin + Fe(2+). It functions in the pathway cofactor biosynthesis; adenosylcobalamin biosynthesis; precorrin-2 from uroporphyrinogen III: step 1/1. Its pathway is cofactor biosynthesis; adenosylcobalamin biosynthesis; sirohydrochlorin from precorrin-2: step 1/1. It participates in porphyrin-containing compound metabolism; siroheme biosynthesis; precorrin-2 from uroporphyrinogen III: step 1/1. The protein operates within porphyrin-containing compound metabolism; siroheme biosynthesis; siroheme from sirohydrochlorin: step 1/1. It functions in the pathway porphyrin-containing compound metabolism; siroheme biosynthesis; sirohydrochlorin from precorrin-2: step 1/1. Functionally, multifunctional enzyme that catalyzes the SAM-dependent methylations of uroporphyrinogen III at position C-2 and C-7 to form precorrin-2 via precorrin-1. Then it catalyzes the NAD-dependent ring dehydrogenation of precorrin-2 to yield sirohydrochlorin. Finally, it catalyzes the ferrochelation of sirohydrochlorin to yield siroheme. The polypeptide is Siroheme synthase 2 (Aeromonas salmonicida (strain A449)).